The chain runs to 316 residues: Pantothenate kinase (316 aa).

95-102 serves as a coordination point for ATP; that stretch reads GSVAVGKS.

The protein belongs to the prokaryotic pantothenate kinase family.

It is found in the cytoplasm. The catalysed reaction is (R)-pantothenate + ATP = (R)-4'-phosphopantothenate + ADP + H(+). It participates in cofactor biosynthesis; coenzyme A biosynthesis; CoA from (R)-pantothenate: step 1/5. This Shewanella putrefaciens (strain CN-32 / ATCC BAA-453) protein is Pantothenate kinase.